The primary structure comprises 68 residues: Conotoxin Mr3.4 (68 aa).

The signal sequence occupies residues 1–19; the sequence is MSKLGVLLTICLLLFPLTA. The propeptide occupies 20 to 49; the sequence is VPLDGDQPADRPAERMQDDISSERHPFFDR. 3 disulfide bridges follow: C53-C67, C54-C63, and C59-C66. P65 is subject to 4-hydroxyproline.

This sequence belongs to the conotoxin M superfamily. As to expression, expressed by the venom duct.

The protein resides in the secreted. This Conus marmoreus (Marble cone) protein is Conotoxin Mr3.4.